We begin with the raw amino-acid sequence, 109 residues long: N-cym protein (109 aa).

In terms of assembly, interacts with MYCN and GSK3B. In terms of tissue distribution, expressed in the neuronal cells of the cerebrum and cerebellum, spermatocytes of the testis, pancreatic cells and also the heart. Expressed in both primary and metastatic neuroblastomas and in thyroid tumors (at protein level). Expression is associated with poor prognosis in neuroblastoma. Expressed in the fetal brain, lung, liver and kidney at varying low levels.

The protein resides in the cytoplasm. The protein localises to the nucleus. Its function is as follows. Regulates stability of MYCN in neuroblastoma cells by inhibiting GSK3B-mediated MYCN phosphorylation. Inhibits GSK3B activity by promoting its phosphorylation at 'Ser-9'. This chain is N-cym protein (MYCNOS), found in Homo sapiens (Human).